A 273-amino-acid chain; its full sequence is Putative phosphoenolpyruvate synthase regulatory protein (273 aa).

154 to 161 lines the ADP pocket; it reads GVSRSGKT.

Belongs to the pyruvate, phosphate/water dikinase regulatory protein family. PSRP subfamily.

It catalyses the reaction [pyruvate, water dikinase] + ADP = [pyruvate, water dikinase]-phosphate + AMP + H(+). It carries out the reaction [pyruvate, water dikinase]-phosphate + phosphate + H(+) = [pyruvate, water dikinase] + diphosphate. Bifunctional serine/threonine kinase and phosphorylase involved in the regulation of the phosphoenolpyruvate synthase (PEPS) by catalyzing its phosphorylation/dephosphorylation. The protein is Putative phosphoenolpyruvate synthase regulatory protein of Halorhodospira halophila (strain DSM 244 / SL1) (Ectothiorhodospira halophila (strain DSM 244 / SL1)).